Here is a 471-residue protein sequence, read N- to C-terminus: MTQTADAASTALTSGDAASRNIPKIGFVSLGCPKALTDSELILTQLRAEGYDTSKSFAGADLVIVNTCGFIDDAVKESLDTIGEALAENGRVIVTGCLGAKAGEGGGNLVRQMHPSVLAVTGPHATQEVMDAVHVHVPKPHDPFVDLVPAYGVKLTPRHYAYLKISEGCNHRCSFCIIPSMRGDLVSRPIGDVLNEARALFESGVKELLVISQDTSAYGVDVKYRTGFWDGKPVKTRMTDLVERLGELAEPFGAWVRLHYVYPYPHVDEILPMMAGGRVLPYLDVPFQHAHPDVLKRMKRPANGEKNLERLQRWREACPQIVVRSTFIAGFPGETEAEFEHLLDFMREARIDRAGCFAYSPVEGASANALAGALPEAVREERRARFMAVAEAVSAEKLRERVGAEMQVLIDAAPALGKKGGRGRSYADAPEIDGVVHLLPPQKASKQLRVGEFTRARIVGTQGHDLVGQPL.

Positions 23 to 138 (PKIGFVSLGC…VMDAVHVHVP (116 aa)) constitute an MTTase N-terminal domain. [4Fe-4S] cluster is bound by residues Cys32, Cys68, Cys97, Cys169, Cys173, and Cys176. In terms of domain architecture, Radical SAM core spans 155-396 (LTPRHYAYLK…MAVAEAVSAE (242 aa)). In terms of domain architecture, TRAM spans 399-471 (RERVGAEMQV…QGHDLVGQPL (73 aa)).

This sequence belongs to the methylthiotransferase family. RimO subfamily. Requires [4Fe-4S] cluster as cofactor.

It is found in the cytoplasm. It carries out the reaction L-aspartate(89)-[ribosomal protein uS12]-hydrogen + (sulfur carrier)-SH + AH2 + 2 S-adenosyl-L-methionine = 3-methylsulfanyl-L-aspartate(89)-[ribosomal protein uS12]-hydrogen + (sulfur carrier)-H + 5'-deoxyadenosine + L-methionine + A + S-adenosyl-L-homocysteine + 2 H(+). Functionally, catalyzes the methylthiolation of an aspartic acid residue of ribosomal protein uS12. The polypeptide is Ribosomal protein uS12 methylthiotransferase RimO (Methylibium petroleiphilum (strain ATCC BAA-1232 / LMG 22953 / PM1)).